A 159-amino-acid chain; its full sequence is MITKAIYPGTFDPITNGHLDLVTRASEMFSHVILAIADSSSKKPMFTLAERVILAKQVTAPLKNVEVLGFSELMAEFAKKHNANILVRGLRSVSDFEYEWQLANMNRHLMPKLESVFLMPSEKWSFISSSLVKEVARHGGDITPFLPAPVTKALMTKLA.

Thr10 is a binding site for substrate. ATP-binding positions include 10–11 and His18; that span reads TF. 3 residues coordinate substrate: Lys42, Met74, and Arg88. ATP-binding positions include 89–91, Glu99, and 124–130; these read GLR and WSFISSS.

The protein belongs to the bacterial CoaD family. In terms of assembly, homohexamer. Mg(2+) is required as a cofactor.

The protein resides in the cytoplasm. The catalysed reaction is (R)-4'-phosphopantetheine + ATP + H(+) = 3'-dephospho-CoA + diphosphate. It participates in cofactor biosynthesis; coenzyme A biosynthesis; CoA from (R)-pantothenate: step 4/5. In terms of biological role, reversibly transfers an adenylyl group from ATP to 4'-phosphopantetheine, yielding dephospho-CoA (dPCoA) and pyrophosphate. In Yersinia enterocolitica serotype O:8 / biotype 1B (strain NCTC 13174 / 8081), this protein is Phosphopantetheine adenylyltransferase.